The chain runs to 357 residues: 3-isopropylmalate dehydrogenase (357 aa).

Substrate-binding residues include Arg99, Arg109, Arg133, and Asp223. Mg(2+) contacts are provided by Asp223, Asp247, and Asp251. 283-295 is an NAD(+) binding site; it reads GSAPDIAGEQRAD.

Belongs to the isocitrate and isopropylmalate dehydrogenases family. LeuB type 2 subfamily. In terms of assembly, homodimer. Mg(2+) serves as cofactor. Requires Mn(2+) as cofactor.

It localises to the cytoplasm. The enzyme catalyses (2R,3S)-3-isopropylmalate + NAD(+) = 4-methyl-2-oxopentanoate + CO2 + NADH. The protein operates within amino-acid biosynthesis; L-leucine biosynthesis; L-leucine from 3-methyl-2-oxobutanoate: step 3/4. Functionally, catalyzes the oxidation of 3-carboxy-2-hydroxy-4-methylpentanoate (3-isopropylmalate) to 3-carboxy-4-methyl-2-oxopentanoate. The product decarboxylates to 4-methyl-2 oxopentanoate. This Leifsonia xyli subsp. xyli (strain CTCB07) protein is 3-isopropylmalate dehydrogenase.